The primary structure comprises 194 residues: Molybdenum cofactor guanylyltransferase (194 aa).

GTP-binding positions include 12-14 (LAG), K25, N53, D71, and D101. D101 provides a ligand contact to Mg(2+).

Belongs to the MobA family. Monomer. It depends on Mg(2+) as a cofactor.

The protein localises to the cytoplasm. It carries out the reaction Mo-molybdopterin + GTP + H(+) = Mo-molybdopterin guanine dinucleotide + diphosphate. Transfers a GMP moiety from GTP to Mo-molybdopterin (Mo-MPT) cofactor (Moco or molybdenum cofactor) to form Mo-molybdopterin guanine dinucleotide (Mo-MGD) cofactor. The protein is Molybdenum cofactor guanylyltransferase of Escherichia coli O157:H7.